Reading from the N-terminus, the 207-residue chain is Imidazoleglycerol-phosphate dehydratase (207 aa).

The protein belongs to the imidazoleglycerol-phosphate dehydratase family.

Its subcellular location is the cytoplasm. The catalysed reaction is D-erythro-1-(imidazol-4-yl)glycerol 3-phosphate = 3-(imidazol-4-yl)-2-oxopropyl phosphate + H2O. It participates in amino-acid biosynthesis; L-histidine biosynthesis; L-histidine from 5-phospho-alpha-D-ribose 1-diphosphate: step 6/9. This Mycobacterium avium (strain 104) protein is Imidazoleglycerol-phosphate dehydratase.